Consider the following 520-residue polypeptide: Protein RCC2 (520 aa).

A disordered region spans residues 1-78 (MPRKKGAAWE…RPATAGKAAG (78 aa)). Position 14 is a phosphoserine (S14). T18 carries the post-translational modification Phosphothreonine. Residues 22 to 34 (GPRRRGGPAGRKR) are compositionally biased toward basic residues. Phosphoserine is present on residues S41, S42, S43, S44, S48, and S49. The segment covering 69–78 (RPATAGKAAG) has biased composition (low complexity). 2 positions are modified to N6-acetyllysine: K90 and K122. 7 RCC1 repeats span residues 101-163 (KGQL…SLLI), 166-217 (EGKL…ALTD), 219-269 (GSVF…LMDC), 271-345 (GNLY…VLDS), 346-399 (QKRV…AVSE), 401-445 (GGLF…VAAD), and 446-499 (ESTI…VIAR). K291 carries the N6-acetyllysine modification. The required for interaction with RAC1 stretch occupies residues 316–323 (KTKDGQIL). T340 carries the post-translational modification Phosphothreonine. K375 is modified (N6-acetyllysine).

In terms of assembly, interacts with RAC1. Interacts with nucleotide-free and with GDP and GTP-bound forms of RAC1, with a slight preference for GDP-bound RAC1. Binds preferentially to the nucleotide-free form of RAC1. Interacts with CORO1C. Interacts with microtubules.

It is found in the nucleus. It localises to the nucleolus. The protein localises to the cytoplasm. Its subcellular location is the cytoskeleton. The protein resides in the chromosome. It is found in the centromere. It localises to the spindle. The protein localises to the midbody. Its subcellular location is the cell membrane. In terms of biological role, multifunctional protein that may affect its functions by regulating the activity of small GTPases, such as RAC1 and RALA. Required for normal progress through the cell cycle, both during interphase and during mitosis. Required for the presence of normal levels of MAD2L1, AURKB and BIRC5 on inner centromeres during mitosis, and for normal attachment of kinetochores to mitotic spindles. Required for normal organization of the microtubule cytoskeleton in interphase cells. Functions as a guanine nucleotide exchange factor (GEF) for RALA. Interferes with the activation of RAC1 by guanine nucleotide exchange factors. Prevents accumulation of active, GTP-bound RAC1, and suppresses RAC1-mediated reorganization of the actin cytoskeleton and formation of membrane protrusions. Required for normal cellular responses to contacts with the extracellular matrix of adjacent cells, and for directional cell migration in response to a fibronectin gradient (in vitro). The polypeptide is Protein RCC2 (Rcc2) (Mus musculus (Mouse)).